The chain runs to 297 residues: 2-dehydropantoate 2-reductase (297 aa).

Residues 11-16, Asn-107, and Ala-133 each bind NADP(+); that span reads GAGAMG. Asn-107 provides a ligand contact to substrate. The active-site Proton donor is Lys-187. Substrate-binding residues include Asn-191, Asn-195, Asn-205, and Ser-251. Glu-263 provides a ligand contact to NADP(+).

This sequence belongs to the ketopantoate reductase family.

Its subcellular location is the cytoplasm. The enzyme catalyses (R)-pantoate + NADP(+) = 2-dehydropantoate + NADPH + H(+). It functions in the pathway cofactor biosynthesis; (R)-pantothenate biosynthesis; (R)-pantoate from 3-methyl-2-oxobutanoate: step 2/2. In terms of biological role, catalyzes the NADPH-dependent reduction of ketopantoate into pantoic acid. The sequence is that of 2-dehydropantoate 2-reductase from Listeria monocytogenes serovar 1/2a (strain ATCC BAA-679 / EGD-e).